Here is a 502-residue protein sequence, read N- to C-terminus: UDP-N-acetylmuramoylalanine--D-glutamate ligase (502 aa).

An ATP-binding site is contributed by 136–142; sequence GTNGKTT.

Belongs to the MurCDEF family.

Its subcellular location is the cytoplasm. The enzyme catalyses UDP-N-acetyl-alpha-D-muramoyl-L-alanine + D-glutamate + ATP = UDP-N-acetyl-alpha-D-muramoyl-L-alanyl-D-glutamate + ADP + phosphate + H(+). Its pathway is cell wall biogenesis; peptidoglycan biosynthesis. In terms of biological role, cell wall formation. Catalyzes the addition of glutamate to the nucleotide precursor UDP-N-acetylmuramoyl-L-alanine (UMA). This Corynebacterium jeikeium (strain K411) protein is UDP-N-acetylmuramoylalanine--D-glutamate ligase.